The following is a 406-amino-acid chain: Multifunctional CCA protein (406 aa).

2 residues coordinate ATP: Gly-8 and Arg-11. The CTP site is built by Gly-8 and Arg-11. The Mg(2+) site is built by Glu-21 and Asp-23. ATP contacts are provided by Arg-91, Arg-137, and Arg-140. CTP is bound by residues Arg-91, Arg-137, and Arg-140. In terms of domain architecture, HD spans 225–326 (TGIHTLKVLE…LKLLNRVDAF (102 aa)).

Belongs to the tRNA nucleotidyltransferase/poly(A) polymerase family. Bacterial CCA-adding enzyme type 1 subfamily. As to quaternary structure, monomer. Can also form homodimers and oligomers. The cofactor is Mg(2+). Ni(2+) is required as a cofactor.

It carries out the reaction a tRNA precursor + 2 CTP + ATP = a tRNA with a 3' CCA end + 3 diphosphate. The catalysed reaction is a tRNA with a 3' CCA end + 2 CTP + ATP = a tRNA with a 3' CCACCA end + 3 diphosphate. Its function is as follows. Catalyzes the addition and repair of the essential 3'-terminal CCA sequence in tRNAs without using a nucleic acid template. Adds these three nucleotides in the order of C, C, and A to the tRNA nucleotide-73, using CTP and ATP as substrates and producing inorganic pyrophosphate. tRNA 3'-terminal CCA addition is required both for tRNA processing and repair. Also involved in tRNA surveillance by mediating tandem CCA addition to generate a CCACCA at the 3' terminus of unstable tRNAs. While stable tRNAs receive only 3'-terminal CCA, unstable tRNAs are marked with CCACCA and rapidly degraded. This Nitrosococcus oceani (strain ATCC 19707 / BCRC 17464 / JCM 30415 / NCIMB 11848 / C-107) protein is Multifunctional CCA protein.